The chain runs to 473 residues: Probable glucose-6-phosphate 1-dehydrogenase C7.13c (473 aa).

NADP(+) contacts are provided by R43, Y121, and K144. D-glucose 6-phosphate is bound by residues K144, 174–178 (HYTAK), E213, and D232. H237 acts as the Proton acceptor in catalysis. K331 is a binding site for D-glucose 6-phosphate. K341 serves as a coordination point for NADP(+). Q366 lines the D-glucose 6-phosphate pocket.

It belongs to the glucose-6-phosphate dehydrogenase family.

It localises to the cytoplasm. It catalyses the reaction D-glucose 6-phosphate + NADP(+) = 6-phospho-D-glucono-1,5-lactone + NADPH + H(+). It functions in the pathway carbohydrate degradation; pentose phosphate pathway; D-ribulose 5-phosphate from D-glucose 6-phosphate (oxidative stage): step 1/3. Its function is as follows. Catalyzes the rate-limiting step of the oxidative pentose-phosphate pathway, which represents a route for the dissimilation of carbohydrates besides glycolysis. The main function of this enzyme is to provide reducing power (NADPH) and pentose phosphates for fatty acid and nucleic acid synthesis. The polypeptide is Probable glucose-6-phosphate 1-dehydrogenase C7.13c (Schizosaccharomyces pombe (strain 972 / ATCC 24843) (Fission yeast)).